The primary structure comprises 3120 residues: DNA-directed RNA polymerase subunit beta'' (3120 aa).

The Zn(2+) site is built by Cys-323, Cys-396, Cys-403, and Cys-406. An insert-1 region spans residues 595 to 1130; sequence FIGEGKQNVL…LKTLVLKKWF (536 aa). Residues 1796–2346 form an insert-2 region; that stretch reads KGHLVAYARP…NGIIQAKSLL (551 aa). An insert-3 region spans residues 2422 to 2610; it reads NSNFLENTHF…PEGEGEKDMT (189 aa). Residues 2726 to 2801 form an insert-4 region; sequence FSKKRWKKSI…KQNQTIILAL (76 aa). Positions 2856–2996 are insert-5; the sequence is ASKMSEYMFS…LNQLLSNNLD (141 aa). A disordered region spans residues 2926-2956; that stretch reads EGIDSSKIPSSNIPEGKVTQNNKRKSTRKNV. Polar residues predominate over residues 2932–2946; it reads KIPSSNIPEGKVTQN.

This sequence belongs to the RNA polymerase beta' chain family. RpoC2 subfamily. As to quaternary structure, in plastids the minimal PEP RNA polymerase catalytic core is composed of four subunits: alpha, beta, beta', and beta''. When a (nuclear-encoded) sigma factor is associated with the core the holoenzyme is formed, which can initiate transcription. It depends on Zn(2+) as a cofactor.

It localises to the plastid. The protein resides in the chloroplast. It catalyses the reaction RNA(n) + a ribonucleoside 5'-triphosphate = RNA(n+1) + diphosphate. Functionally, DNA-dependent RNA polymerase catalyzes the transcription of DNA into RNA using the four ribonucleoside triphosphates as substrates. This chain is DNA-directed RNA polymerase subunit beta'', found in Chlamydomonas reinhardtii (Chlamydomonas smithii).